Reading from the N-terminus, the 376-residue chain is Chaperone protein DnaJ (376 aa).

A J domain is found at 5–70 (DYYEVLGVGR…DKKAAYDQFG (66 aa)). A CR-type zinc finger spans residues 132-210 (GLTKELRIPT…CHGEGRVEKS (79 aa)). Residues Cys-145, Cys-148, Cys-162, Cys-165, Cys-184, Cys-187, Cys-198, and Cys-201 each coordinate Zn(2+). CXXCXGXG motif repeat units follow at residues 145 to 152 (CDSCDGSG), 162 to 169 (CGTCHGQG), 184 to 191 (CPTCHGRG), and 198 to 205 (CNKCHGEG).

The protein belongs to the DnaJ family. Homodimer. The cofactor is Zn(2+).

It is found in the cytoplasm. Participates actively in the response to hyperosmotic and heat shock by preventing the aggregation of stress-denatured proteins and by disaggregating proteins, also in an autonomous, DnaK-independent fashion. Unfolded proteins bind initially to DnaJ; upon interaction with the DnaJ-bound protein, DnaK hydrolyzes its bound ATP, resulting in the formation of a stable complex. GrpE releases ADP from DnaK; ATP binding to DnaK triggers the release of the substrate protein, thus completing the reaction cycle. Several rounds of ATP-dependent interactions between DnaJ, DnaK and GrpE are required for fully efficient folding. Also involved, together with DnaK and GrpE, in the DNA replication of plasmids through activation of initiation proteins. In Shewanella pealeana (strain ATCC 700345 / ANG-SQ1), this protein is Chaperone protein DnaJ.